The following is a 436-amino-acid chain: Tol-Pal system protein TolB (436 aa).

Positions 1-19 (MVKCSLIRALMVVAGLVGA) are cleaved as a signal peptide.

The protein belongs to the TolB family. In terms of assembly, the Tol-Pal system is composed of five core proteins: the inner membrane proteins TolA, TolQ and TolR, the periplasmic protein TolB and the outer membrane protein Pal. They form a network linking the inner and outer membranes and the peptidoglycan layer.

The protein localises to the periplasm. Functionally, part of the Tol-Pal system, which plays a role in outer membrane invagination during cell division and is important for maintaining outer membrane integrity. This chain is Tol-Pal system protein TolB, found in Rhizobium etli (strain ATCC 51251 / DSM 11541 / JCM 21823 / NBRC 15573 / CFN 42).